A 98-amino-acid polypeptide reads, in one-letter code: Protein Asterix (98 aa).

The next 2 helical transmembrane spans lie at 32–52 (LFSI…CLWV) and 78–98 (VSLS…NLFV).

This sequence belongs to the Asterix family.

The protein localises to the membrane. This is Protein Asterix from Dictyostelium discoideum (Social amoeba).